We begin with the raw amino-acid sequence, 512 residues long: Glutamyl-tRNA(Gln) amidotransferase subunit A (512 aa).

Catalysis depends on charge relay system residues Lys82 and Ser157. Catalysis depends on Ser181, which acts as the Acyl-ester intermediate.

Belongs to the amidase family. GatA subfamily. Heterotrimer of A, B and C subunits.

The enzyme catalyses L-glutamyl-tRNA(Gln) + L-glutamine + ATP + H2O = L-glutaminyl-tRNA(Gln) + L-glutamate + ADP + phosphate + H(+). Functionally, allows the formation of correctly charged Gln-tRNA(Gln) through the transamidation of misacylated Glu-tRNA(Gln) in organisms which lack glutaminyl-tRNA synthetase. The reaction takes place in the presence of glutamine and ATP through an activated gamma-phospho-Glu-tRNA(Gln). This chain is Glutamyl-tRNA(Gln) amidotransferase subunit A, found in Bordetella bronchiseptica (strain ATCC BAA-588 / NCTC 13252 / RB50) (Alcaligenes bronchisepticus).